The primary structure comprises 355 residues: Peptide chain release factor 1 (355 aa).

Residue Gln-233 is modified to N5-methylglutamine. Residues 281 to 293 (RRNKEQERADSRR) show a composition bias toward basic and acidic residues. The tract at residues 281–308 (RRNKEQERADSRRGQIGSGDRSERIRTY) is disordered.

This sequence belongs to the prokaryotic/mitochondrial release factor family. In terms of processing, methylated by PrmC. Methylation increases the termination efficiency of RF1.

It localises to the cytoplasm. Peptide chain release factor 1 directs the termination of translation in response to the peptide chain termination codons UAG and UAA. The polypeptide is Peptide chain release factor 1 (Rickettsia akari (strain Hartford)).